The following is a 288-amino-acid chain: Fe-S cluster assembly protein dre2 (288 aa).

Residues 1 to 127 (MSSSVLVLTS…LSRPNQVEAV (127 aa)) are N-terminal SAM-like domain. Positions 128–177 (PIKLSNKNGQSASKNKILDFLKSDKENLISGDDDQELIDEDELLDESAHD) are linker. Residues cysteine 185, cysteine 196, cysteine 199, and cysteine 201 each contribute to the [2Fe-2S] cluster site. The interval 185–201 (CKPEPGKKKRACKNCTC) is fe-S binding site A. [4Fe-4S] cluster-binding residues include cysteine 244, cysteine 247, cysteine 255, and cysteine 258. Short sequence motifs (cx2C motif) lie at residues 244-247 (CGNC) and 255-258 (CSGC). The tract at residues 244–258 (CGNCYLGDAFRCSGC) is fe-S binding site B.

Belongs to the anamorsin family. As to quaternary structure, monomer. Interacts with tah18. Interacts with tim40. It depends on [2Fe-2S] cluster as a cofactor. Requires [4Fe-4S] cluster as cofactor.

Its subcellular location is the cytoplasm. The protein resides in the mitochondrion intermembrane space. Functionally, component of the cytosolic iron-sulfur (Fe-S) protein assembly (CIA) machinery required for the maturation of extramitochondrial Fe-S proteins. Part of an electron transfer chain functioning in an early step of cytosolic Fe-S biogenesis, facilitating the de novo assembly of a [4Fe-4S] cluster on the scaffold complex cfd1-nbp35. Electrons are transferred to dre2 from NADPH via the FAD- and FMN-containing protein tah18. Tah18-dre2 are also required for the assembly of the diferric tyrosyl radical cofactor of ribonucleotide reductase (RNR), probably by providing electrons for reduction during radical cofactor maturation in the catalytic small subunit suc22. The protein is Fe-S cluster assembly protein dre2 of Schizosaccharomyces pombe (strain 972 / ATCC 24843) (Fission yeast).